Reading from the N-terminus, the 403-residue chain is Casein kinase I isoform delta-A (403 aa).

The region spanning 9 to 277 (YRLGRKIGSG…YLRQLFRNLF (269 aa)) is the Protein kinase domain. Residues 15–23 (IGSGSFGDI) and K38 contribute to the ATP site. The active-site Proton acceptor is D128. Residues 315–340 (QGRIPLPRVMLPTSSGRPRGTQEVAP) form an autoinhibitory region. The segment at 322 to 403 (RVMLPTSSGR…PSGLQSAVPR (82 aa)) is disordered.

The protein belongs to the protein kinase superfamily. Monomer. Interacts with per1 and per2. Component of the circadian core oscillator. In terms of processing, autophosphorylated on serine and threonine residues.

The protein localises to the cytoplasm. It is found in the nucleus. The catalysed reaction is L-seryl-[protein] + ATP = O-phospho-L-seryl-[protein] + ADP + H(+). It carries out the reaction L-threonyl-[protein] + ATP = O-phospho-L-threonyl-[protein] + ADP + H(+). With respect to regulation, exhibits substrate-dependent heparin activation. Functionally, casein kinases are operationally defined by their preferential utilization of acidic proteins such as caseins as substrates. Central component of the circadian clock. May act as a negative regulator of circadian rhythmicity by phosphorylating per1 and per2, which may lead to their degradation. Participates in wnt signaling. This chain is Casein kinase I isoform delta-A (csnk1da), found in Danio rerio (Zebrafish).